A 278-amino-acid polypeptide reads, in one-letter code: 3-methyl-2-oxobutanoate hydroxymethyltransferase (278 aa).

2 residues coordinate Mg(2+): aspartate 43 and aspartate 82. 3-methyl-2-oxobutanoate contacts are provided by residues 43-44 (DS), aspartate 82, and lysine 112. Glutamate 114 is a Mg(2+) binding site. The active-site Proton acceptor is the glutamate 181.

This sequence belongs to the PanB family. As to quaternary structure, homodecamer; pentamer of dimers. Requires Mg(2+) as cofactor.

Its subcellular location is the cytoplasm. The catalysed reaction is 3-methyl-2-oxobutanoate + (6R)-5,10-methylene-5,6,7,8-tetrahydrofolate + H2O = 2-dehydropantoate + (6S)-5,6,7,8-tetrahydrofolate. It functions in the pathway cofactor biosynthesis; (R)-pantothenate biosynthesis; (R)-pantoate from 3-methyl-2-oxobutanoate: step 1/2. In terms of biological role, catalyzes the reversible reaction in which hydroxymethyl group from 5,10-methylenetetrahydrofolate is transferred onto alpha-ketoisovalerate to form ketopantoate. The protein is 3-methyl-2-oxobutanoate hydroxymethyltransferase of Bacillus cereus (strain AH187).